The sequence spans 556 residues: Formate--tetrahydrofolate ligase (556 aa).

ATP is bound at residue 65–72 (TPAGEGKT).

This sequence belongs to the formate--tetrahydrofolate ligase family.

The enzyme catalyses (6S)-5,6,7,8-tetrahydrofolate + formate + ATP = (6R)-10-formyltetrahydrofolate + ADP + phosphate. It participates in one-carbon metabolism; tetrahydrofolate interconversion. In Clostridium cylindrosporum, this protein is Formate--tetrahydrofolate ligase.